The following is a 175-amino-acid chain: Protein GrpE (175 aa).

Belongs to the GrpE family. As to quaternary structure, homodimer.

It is found in the cytoplasm. Its function is as follows. Participates actively in the response to hyperosmotic and heat shock by preventing the aggregation of stress-denatured proteins, in association with DnaK and GrpE. It is the nucleotide exchange factor for DnaK and may function as a thermosensor. Unfolded proteins bind initially to DnaJ; upon interaction with the DnaJ-bound protein, DnaK hydrolyzes its bound ATP, resulting in the formation of a stable complex. GrpE releases ADP from DnaK; ATP binding to DnaK triggers the release of the substrate protein, thus completing the reaction cycle. Several rounds of ATP-dependent interactions between DnaJ, DnaK and GrpE are required for fully efficient folding. In Thermoplasma acidophilum (strain ATCC 25905 / DSM 1728 / JCM 9062 / NBRC 15155 / AMRC-C165), this protein is Protein GrpE.